Here is a 160-residue protein sequence, read N- to C-terminus: Troponin C, skeletal muscle (160 aa).

Thr-2 carries the post-translational modification N-acetylthreonine. EF-hand domains lie at 15–50 (EMIAEFKAAFDMFDADGGGDISVKELGTVMRMLGQT), 51–86 (PTKEELDAIIEEVDEDGSGTIDFEEFLVMMVRQMKE), 91–126 (KSEEELAECFRIFDRNADGYIDAEELAEIFRASGEH), and 127–160 (VTDEEIESLMKDGDKNNDGRIDFDEFLKMMEGVQ). Ca(2+) contacts are provided by Asp-28, Asp-30, Asp-34, Glu-39, Asp-64, Asp-66, Ser-68, Thr-70, Glu-75, Asp-104, Asn-106, Asp-108, Tyr-110, Glu-115, Asp-140, Asn-142, Asp-144, Arg-146, and Glu-151.

It belongs to the troponin C family.

In terms of biological role, troponin is the central regulatory protein of striated muscle contraction. Tn consists of three components: Tn-I which is the inhibitor of actomyosin ATPase, Tn-T which contains the binding site for tropomyosin and Tn-C. The binding of calcium to Tn-C abolishes the inhibitory action of Tn on actin filaments. The chain is Troponin C, skeletal muscle (TNNC2) from Oryctolagus cuniculus (Rabbit).